Reading from the N-terminus, the 181-residue chain is Probable N-acetyltransferase YjcK (181 aa).

In terms of domain architecture, N-acetyltransferase spans 7–172; sequence IYVRPLEVTD…NGVWEDHQVL (166 aa).

This sequence belongs to the acetyltransferase family. RimJ subfamily.

It catalyses the reaction an N-terminal L-alpha-aminoacyl-[protein] + acetyl-CoA = N-terminal N(alpha)-acetyl-L-alpha-aminoacyl-[protein] + CoA + H(+). Its function is as follows. Probable N-terminal protein acetyltransferase. This chain is Probable N-acetyltransferase YjcK (yjcK), found in Bacillus subtilis (strain 168).